The chain runs to 248 residues: Triosephosphate isomerase (248 aa).

9-11 contributes to the substrate binding site; that stretch reads NWK. Residue His94 is the Electrophile of the active site. Glu166 (proton acceptor) is an active-site residue. Residues Gly172, Ser212, and 233–234 each bind substrate; that span reads GG.

The protein belongs to the triosephosphate isomerase family. As to quaternary structure, homodimer.

Its subcellular location is the cytoplasm. It catalyses the reaction D-glyceraldehyde 3-phosphate = dihydroxyacetone phosphate. It participates in carbohydrate biosynthesis; gluconeogenesis. It functions in the pathway carbohydrate degradation; glycolysis; D-glyceraldehyde 3-phosphate from glycerone phosphate: step 1/1. In terms of biological role, involved in the gluconeogenesis. Catalyzes stereospecifically the conversion of dihydroxyacetone phosphate (DHAP) to D-glyceraldehyde-3-phosphate (G3P). This is Triosephosphate isomerase from Thermoanaerobacter pseudethanolicus (strain ATCC 33223 / 39E) (Clostridium thermohydrosulfuricum).